The sequence spans 403 residues: DNA primase DnaG (403 aa).

The Toprim domain maps to 172–248 (DSVIIVEGRA…HIDYIARAPP (77 aa)). Mg(2+)-binding residues include Glu178, Asp222, and Asp224. The segment at 279–300 (AAGEKTEAPAQPTQQQPPPAEA) is disordered.

This sequence belongs to the archaeal DnaG primase family. As to quaternary structure, forms a ternary complex with MCM helicase and DNA. Component of the archaeal exosome complex. Mg(2+) serves as cofactor.

The catalysed reaction is ssDNA + n NTP = ssDNA/pppN(pN)n-1 hybrid + (n-1) diphosphate.. Functionally, RNA polymerase that catalyzes the synthesis of short RNA molecules used as primers for DNA polymerase during DNA replication. Also part of the exosome, which is a complex involved in RNA degradation. Acts as a poly(A)-binding protein that enhances the interaction between heteromeric, adenine-rich transcripts and the exosome. This Pyrobaculum neutrophilum (strain DSM 2338 / JCM 9278 / NBRC 100436 / V24Sta) (Thermoproteus neutrophilus) protein is DNA primase DnaG.